Consider the following 122-residue polypeptide: S-adenosylmethionine decarboxylase proenzyme (122 aa).

Ser-63 serves as the catalytic Schiff-base intermediate with substrate; via pyruvic acid. Residue Ser-63 is modified to Pyruvic acid (Ser); by autocatalysis. His-68 (proton acceptor; for processing activity) is an active-site residue. Catalysis depends on Cys-83, which acts as the Proton donor; for catalytic activity.

It belongs to the prokaryotic AdoMetDC family. Type 1 subfamily. As to quaternary structure, heterotetramer of two alpha and two beta chains arranged as a dimer of alpha/beta heterodimers. Pyruvate is required as a cofactor. Post-translationally, is synthesized initially as an inactive proenzyme. Formation of the active enzyme involves a self-maturation process in which the active site pyruvoyl group is generated from an internal serine residue via an autocatalytic post-translational modification. Two non-identical subunits are generated from the proenzyme in this reaction, and the pyruvate is formed at the N-terminus of the alpha chain, which is derived from the carboxyl end of the proenzyme. The post-translation cleavage follows an unusual pathway, termed non-hydrolytic serinolysis, in which the side chain hydroxyl group of the serine supplies its oxygen atom to form the C-terminus of the beta chain, while the remainder of the serine residue undergoes an oxidative deamination to produce ammonia and the pyruvoyl group blocking the N-terminus of the alpha chain.

It carries out the reaction S-adenosyl-L-methionine + H(+) = S-adenosyl 3-(methylsulfanyl)propylamine + CO2. The protein operates within amine and polyamine biosynthesis; S-adenosylmethioninamine biosynthesis; S-adenosylmethioninamine from S-adenosyl-L-methionine: step 1/1. Functionally, catalyzes the decarboxylation of S-adenosylmethionine to S-adenosylmethioninamine (dcAdoMet), the propylamine donor required for the synthesis of the polyamines spermine and spermidine from the diamine putrescine. This is S-adenosylmethionine decarboxylase proenzyme from Methanococcus maripaludis (strain DSM 14266 / JCM 13030 / NBRC 101832 / S2 / LL).